Consider the following 434-residue polypeptide: MKKNFSYWRIFHHIFALPYCSLEKAYKASKRIQKIKKDYFLYKNILFSSKRSWQSILFYIDTELNNSVFKIYLSLLEYKLSLWLIQLFLIFSLFFKKNSKFDLILPNINEKKKKRKINRKLAWIRATLNDLESWRRYYLFSSFLSLDKKEKNNFSFLQMKSSRLTAIAYESIGLVPRSITRTFSRFKAELTNQSSSLVLKEFRLAKYQALASLQYIGCLFFIPLGVSFFFQKCFLEPWIQNWWNIYQSQIFLTSFQEEKALKKLQEIEELFWLDKVMTYSSNKIQLQDLTKEIHQQTIELVQIYNNDSIKIVLHLLTDLIWFITLSCLFILGKERLVILNSWAQELFYSLSDTMKAFFILLLTDLCIGFHSPHGWEIVISSCLEHFGFVHNKHVISCFVSTFPVILDTVFKYLIFRHLNRISPSIVATYHTMNE.

5 helical membrane-spanning segments follow: residues 75–95 (LLEY…SLFF), 210–230 (LASL…SFFF), 311–331 (IVLH…LFIL), 359–379 (ILLL…EIVI), and 395–415 (ISCF…YLIF).

It belongs to the CemA family.

The protein resides in the plastid. It localises to the chloroplast inner membrane. The enzyme catalyses K(+)(in) + H(+)(out) = K(+)(out) + H(+)(in). Its function is as follows. Contributes to K(+)/H(+) antiport activity by supporting proton efflux to control proton extrusion and homeostasis in chloroplasts in a light-dependent manner to modulate photosynthesis. Prevents excessive induction of non-photochemical quenching (NPQ) under continuous-light conditions. Indirectly promotes efficient inorganic carbon uptake into chloroplasts. The protein is Potassium/proton antiporter CemA of Marchantia polymorpha (Common liverwort).